A 186-amino-acid polypeptide reads, in one-letter code: UPF0301 protein Mmc1_0726 (186 aa).

Belongs to the UPF0301 (AlgH) family.

This Magnetococcus marinus (strain ATCC BAA-1437 / JCM 17883 / MC-1) protein is UPF0301 protein Mmc1_0726.